Reading from the N-terminus, the 211-residue chain is ATP-dependent dethiobiotin synthetase BioD (211 aa).

10 to 15 provides a ligand contact to ATP; the sequence is GIGKTY. Residue threonine 14 coordinates Mg(2+). Lysine 35 is an active-site residue. Serine 39 is a binding site for substrate. Residues aspartate 44, 105–108, and 165–166 contribute to the ATP site; these read EGAG and NC. Aspartate 44 and glutamate 105 together coordinate Mg(2+).

It belongs to the dethiobiotin synthetase family. In terms of assembly, homodimer. It depends on Mg(2+) as a cofactor.

It is found in the cytoplasm. It carries out the reaction (7R,8S)-7,8-diammoniononanoate + CO2 + ATP = (4R,5S)-dethiobiotin + ADP + phosphate + 3 H(+). The protein operates within cofactor biosynthesis; biotin biosynthesis; biotin from 7,8-diaminononanoate: step 1/2. In terms of biological role, catalyzes a mechanistically unusual reaction, the ATP-dependent insertion of CO2 between the N7 and N8 nitrogen atoms of 7,8-diaminopelargonic acid (DAPA, also called 7,8-diammoniononanoate) to form a ureido ring. This chain is ATP-dependent dethiobiotin synthetase BioD, found in Methanococcus vannielii (strain ATCC 35089 / DSM 1224 / JCM 13029 / OCM 148 / SB).